The chain runs to 170 residues: Acetyl-CoA decarbonylase/synthase complex subunit epsilon 1 (170 aa).

It belongs to the CdhB family. Heterotetramer of two alpha and two epsilon subunits. The ACDS complex is made up of alpha, epsilon, beta, gamma and delta subunits with a probable stoichiometry of (alpha(2)epsilon(2))(4)-beta(8)-(gamma(1)delta(1))(8).

Its pathway is one-carbon metabolism; methanogenesis from acetate. In terms of biological role, part of a complex that catalyzes the reversible cleavage of acetyl-CoA, allowing growth on acetate as sole source of carbon and energy. The alpha-epsilon subcomponent functions as a carbon monoxide dehydrogenase. The precise role of the epsilon subunit is unclear; it may have a stabilizing role within the alpha(2)epsilon(2) component and/or be involved in electron transfer to FAD during a potential FAD-mediated CO oxidation. This is Acetyl-CoA decarbonylase/synthase complex subunit epsilon 1 (cdhB1) from Methanosarcina mazei (strain ATCC BAA-159 / DSM 3647 / Goe1 / Go1 / JCM 11833 / OCM 88) (Methanosarcina frisia).